Here is a 301-residue protein sequence, read N- to C-terminus: 33 kDa chaperonin (301 aa).

Intrachain disulfides connect cysteine 239–cysteine 241 and cysteine 272–cysteine 275.

This sequence belongs to the HSP33 family. Under oxidizing conditions two disulfide bonds are formed involving the reactive cysteines. Under reducing conditions zinc is bound to the reactive cysteines and the protein is inactive.

It is found in the cytoplasm. Its function is as follows. Redox regulated molecular chaperone. Protects both thermally unfolding and oxidatively damaged proteins from irreversible aggregation. Plays an important role in the bacterial defense system toward oxidative stress. In Trichormus variabilis (strain ATCC 29413 / PCC 7937) (Anabaena variabilis), this protein is 33 kDa chaperonin.